Reading from the N-terminus, the 179-residue chain is Large ribosomal subunit protein uL5 (179 aa).

It belongs to the universal ribosomal protein uL5 family. As to quaternary structure, part of the 50S ribosomal subunit; part of the 5S rRNA/L5/L18/L25 subcomplex. Contacts the 5S rRNA and the P site tRNA. Forms a bridge to the 30S subunit in the 70S ribosome.

In terms of biological role, this is one of the proteins that bind and probably mediate the attachment of the 5S RNA into the large ribosomal subunit, where it forms part of the central protuberance. In the 70S ribosome it contacts protein S13 of the 30S subunit (bridge B1b), connecting the 2 subunits; this bridge is implicated in subunit movement. Contacts the P site tRNA; the 5S rRNA and some of its associated proteins might help stabilize positioning of ribosome-bound tRNAs. The polypeptide is Large ribosomal subunit protein uL5 (Salmonella agona (strain SL483)).